The sequence spans 475 residues: Probable proline--tRNA ligase, mitochondrial (475 aa).

The N-terminal 29 residues, 1–29, are a transit peptide targeting the mitochondrion; it reads MEGLLTRCRALPALATCSRQLSGYVPCRF.

This sequence belongs to the class-II aminoacyl-tRNA synthetase family.

It localises to the mitochondrion matrix. It carries out the reaction tRNA(Pro) + L-proline + ATP = L-prolyl-tRNA(Pro) + AMP + diphosphate. Mitochondrial aminoacyl-tRNA synthetase that catalyzes the specific attachment of the proline amino acid (aa) to the homologous transfer RNA (tRNA), further participating in protein synthesis. The reaction occurs in a two steps: proline is first activated by ATP to form Pro-AMP and then transferred to the acceptor end of tRNA(Pro). The chain is Probable proline--tRNA ligase, mitochondrial from Homo sapiens (Human).